A 736-amino-acid polypeptide reads, in one-letter code: Subtilisin-like protease SBT4.6 (736 aa).

The signal sequence occupies residues M1 to A24. Residues G25 to Q111 constitute a propeptide, activation peptide. Positions V33–L110 constitute an Inhibitor I9 domain. Residues S115–I589 form the Peptidase S8 domain. D143 functions as the Charge relay system in the catalytic mechanism. N-linked (GlcNAc...) asparagine glycosylation occurs at N174. Catalysis depends on H204, which acts as the Charge relay system. Residue N227 is glycosylated (N-linked (GlcNAc...) asparagine). Positions K362 to Y442 constitute a PA domain. An N-linked (GlcNAc...) asparagine glycan is attached at N450. S527 serves as the catalytic Charge relay system. N-linked (GlcNAc...) asparagine glycosylation is found at N564, N598, N610, and N668.

Belongs to the peptidase S8 family. The C-terminal propeptide is autocleaved.

Its subcellular location is the secreted. This is Subtilisin-like protease SBT4.6 from Arabidopsis thaliana (Mouse-ear cress).